The sequence spans 412 residues: Regulator of microtubule dynamics protein 2 (412 aa).

A helical transmembrane segment spans residues L9 to H28. S51 is subject to Phosphoserine. Residues Q72–E110 adopt a coiled-coil conformation. S121 carries the post-translational modification Phosphoserine. The tract at residues P122 to G153 is disordered. At T141 the chain carries Phosphothreonine. At Y154 the chain carries Phosphotyrosine. 2 positions are modified to phosphothreonine: T156 and T159.

This sequence belongs to the RMDN family. In terms of assembly, interacts with microtubules.

It is found in the membrane. The protein resides in the cytoplasm. It localises to the cytoskeleton. The protein localises to the spindle. Its subcellular location is the spindle pole. In Rattus norvegicus (Rat), this protein is Regulator of microtubule dynamics protein 2 (Rmdn2).